A 445-amino-acid polypeptide reads, in one-letter code: MSGHGPAQPMTARRSGPLKGRAEIPGDKSISHRALILGAMAVGETQITGLLEGQDVLDTAKAMRAFGAEVIQHGPGAWSVHGVGVGGFAEPAEVIDCGNSGTGVRLVMGAMATSPLTATFTGDASLRKRPMGRVTDPLALFGTRAYGRKGGRLPMTLVGAADPVPVRYTVPMPSAQVKSAVLLAGLNAPGQTVVIEREATRDHSERMLRGFGAELSVETGPEGQIITLTGQPELRPQTVAVPRDPSSAAFPVCAALIVEGSEILVPGVSRNPTRDGLYVTLLEMGADIAFENEREEGGEPVADLRVRASALKGVEVPPERAPSMIDEYPILSVVAAFAEGSTIMRGVKELRVKESDRIDAMARGLEACGVRIEEDEDTLIVHGMGRVPGGATCATHLDHRIAMSFLVLGMAAEAPVTVDDGSPIATSFPAFTDLMTGLGADLAAG.

The segment at 1 to 25 (MSGHGPAQPMTARRSGPLKGRAEIP) is disordered. Residues lysine 28, serine 29, and arginine 33 each coordinate 3-phosphoshikimate. Lysine 28 lines the phosphoenolpyruvate pocket. Residues glycine 101 and arginine 129 each contribute to the phosphoenolpyruvate site. Residues serine 174, glutamine 176, aspartate 326, and lysine 353 each contribute to the 3-phosphoshikimate site. Position 176 (glutamine 176) interacts with phosphoenolpyruvate. Aspartate 326 (proton acceptor) is an active-site residue. Phosphoenolpyruvate contacts are provided by arginine 357 and arginine 400.

Belongs to the EPSP synthase family. In terms of assembly, monomer.

The protein localises to the cytoplasm. The enzyme catalyses 3-phosphoshikimate + phosphoenolpyruvate = 5-O-(1-carboxyvinyl)-3-phosphoshikimate + phosphate. The protein operates within metabolic intermediate biosynthesis; chorismate biosynthesis; chorismate from D-erythrose 4-phosphate and phosphoenolpyruvate: step 6/7. Catalyzes the transfer of the enolpyruvyl moiety of phosphoenolpyruvate (PEP) to the 5-hydroxyl of shikimate-3-phosphate (S3P) to produce enolpyruvyl shikimate-3-phosphate and inorganic phosphate. This Cereibacter sphaeroides (strain ATCC 17029 / ATH 2.4.9) (Rhodobacter sphaeroides) protein is 3-phosphoshikimate 1-carboxyvinyltransferase.